We begin with the raw amino-acid sequence, 156 residues long: MSRRHAAEKREVLPDPKFGNIIVTKFMNSVMYAGKKSVAESIVYGAFDLIEAKTKQPPLGVFEQALDNVMPTIEVRSRRVGGATYQVPVEVRSTRRQALGIRWLITAARGRNEKTMTERLSAELLDASNNRGNAVKKREDVHKMAEANRAFSHYRW.

In terms of assembly, part of the 30S ribosomal subunit. Contacts proteins S9 and S11.

Its function is as follows. One of the primary rRNA binding proteins, it binds directly to 16S rRNA where it nucleates assembly of the head domain of the 30S subunit. Is located at the subunit interface close to the decoding center, probably blocks exit of the E-site tRNA. In Rhodopseudomonas palustris (strain ATCC BAA-98 / CGA009), this protein is Small ribosomal subunit protein uS7.